Consider the following 383-residue polypeptide: NifS-like protein (383 aa).

Residues 58–59 (SE) and 184–186 (SIN) contribute to the pyridoxal 5'-phosphate site.

This sequence belongs to the class-V pyridoxal-phosphate-dependent aminotransferase family. NifS/IscS subfamily. It depends on pyridoxal 5'-phosphate as a cofactor.

The protein resides in the virion. The polypeptide is NifS-like protein (African swine fever virus (strain Badajoz 1971 Vero-adapted) (Ba71V)).